An 837-amino-acid chain; its full sequence is Translation initiation factor IF-2 (837 aa).

Residues 94-253 (KRSPDEIEAE…QHGFQNPTGP (160 aa)) form a disordered region. The segment covering 95 to 148 (RSPDEIEAERQRELEEQRAAEEAERLKAEEAAARQRAEEEARKAEEAARAKAAE) has biased composition (basic and acidic residues). The span at 149 to 171 (EAVSAQPAAAVEVAAAEPVAKPA) shows a compositional bias: low complexity. Basic and acidic residues-rich tracts occupy residues 172–188 (AAEERKKEEPRRVPKRD) and 220–229 (STDEESDGYR). The segment covering 230–244 (RGGRGGKSKLKKRNQ) has biased composition (basic residues). Positions 337 to 506 (TRAPVVTVMG…LLQAEVLELK (170 aa)) constitute a tr-type G domain. The interval 346–353 (GHVDHGKT) is G1. 346 to 353 (GHVDHGKT) serves as a coordination point for GTP. Residues 371–375 (GITQH) form a G2 region. A G3 region spans residues 392 to 395 (DTPG). GTP is bound by residues 392 to 396 (DTPGH) and 446 to 449 (NKID). Positions 446 to 449 (NKID) are G4. Residues 482-484 (SAK) are G5.

The protein belongs to the TRAFAC class translation factor GTPase superfamily. Classic translation factor GTPase family. IF-2 subfamily.

It localises to the cytoplasm. In terms of biological role, one of the essential components for the initiation of protein synthesis. Protects formylmethionyl-tRNA from spontaneous hydrolysis and promotes its binding to the 30S ribosomal subunits. Also involved in the hydrolysis of GTP during the formation of the 70S ribosomal complex. The polypeptide is Translation initiation factor IF-2 (Pseudomonas paraeruginosa (strain DSM 24068 / PA7) (Pseudomonas aeruginosa (strain PA7))).